Reading from the N-terminus, the 1173-residue chain is MEPNSLQWVGSPCGLHGPYIFYKAFQFHLEGKPRILSLGDFFFVRCTPKDPICIAELQLLWEERTSRQLLSSSKLYFLPEDTPQGRNSDHGEDEVIAVSEKVIVKLEDLVKWVHSDFSKWRCGLQAGSVKTESLGRNGQKEALLKYRQSTLNSGLNFKDVLKEKADLDCLGEDEEETNVIVLSYPQYCRYRSMLKRIQDKPSSILTDQFALALGGIAVVSKNPQILYCRDTFDHPTLIENESICDEFAPNLKGRPRKKKPCPQRRDSFSGGKDPNNNSDGKSVAKVKCEARSALNKPKNNHNNCKKVSNEEKPKVAIGEECRADEQAFLVALYKYMKERKTPIERIPYLGFKQINLWTMFQAAQKLGGYETITARRQWKHIYDELGGNPGSTSAATCTRRHYERLILPYERFIKGEEDKPLPPIKPRKQENNSQENENKTKVSGAKRIKHEISKSKKEKENAPKPQDASEVSSEQEKEQETVNQKSITEPLPIADTKKKLEGYQDFAARPLVSQADPEKDSETDQGANSEKVAEEAGEKGPAPPLASAPLAPTPGTGKQSLTSPSALVDSKEPKPCCFTESPENELQEASFPGFSTTQPPLANQSEVEDDKLPAMADYIANCTVKVDQLGSDDIHNALKQTPKVLVVQSFDMFKDKDLTGPMNENHGLNYTPLLYSRGNPGIMSPLAKKKLLSQVSGASLSSSYPYGSPPPLISKKKVIAREDRCSSLSQAHHGQSTDHMAVNRPSVIQHVQSFRSKPSEERKISDIFKHDKLSRSEPRFSFSKHHLSPSKKSRGRRTVEKRALPHSHMPSFLADFYSSPHLHSLYRHTEHHLHNEQTSKYPCRDMYRETENSSFPSHKHQEKLHVNYLASLHLQDKKSAAVEAPTDDQPTDLSLPKNPHKPTGKALGLAHSAPGPQESKGTSQFQVINSQSRDCHPKACRVSPMTMSAPKKYPEALSRSGKPHPVRLENFRKMDSMVHPILHRKMSPQNIGAARPIKRSLEDLDLVIAGKKARAVSPLDPAKEVSGKEKASEQESEGSKAAHSGHSGGTSEGHKLPLSSPIFPGLYSGSLCSSGLNSRLPAGYSHSLQYLKNQAVLSPLMQPLAFHSLVMQRGIFTSPTNSQQLYRHLAAATPVGSSYGDLLHNSIYPLAAINPQAAFPSSQLSSVHPSTKL.

A Glycyl lysine isopeptide (Lys-Gly) (interchain with G-Cter in SUMO2) cross-link involves residue Lys130. Residues 249-283 (PNLKGRPRKKKPCPQRRDSFSGGKDPNNNSDGKSV) are disordered. Basic residues predominate over residues 253 to 262 (GRPRKKKPCP). Ser267 is modified (phosphoserine). One can recognise an ARID domain in the interval 322–414 (RADEQAFLVA…LILPYERFIK (93 aa)). Position 340 is an N6,N6-dimethyllysine (Lys340). The tract at residues 416–607 (EEDKPLPPIK…QPPLANQSEV (192 aa)) is disordered. A Glycyl lysine isopeptide (Lys-Gly) (interchain with G-Cter in SUMO2) cross-link involves residue Lys449. Positions 450–462 (HEISKSKKEKENA) are enriched in basic and acidic residues. Glycyl lysine isopeptide (Lys-Gly) (interchain with G-Cter in SUMO2) cross-links involve residues Lys497 and Lys499. Residues 547–557 (SAPLAPTPGTG) show a composition bias toward low complexity. Residues 593 to 605 (GFSTTQPPLANQS) show a composition bias toward polar residues. Glycyl lysine isopeptide (Lys-Gly) (interchain with G-Cter in SUMO2) cross-links involve residues Lys763 and Lys769. Disordered regions lie at residues 777 to 802 (EPRF…VEKR), 877 to 924 (KKSA…GTSQ), and 936 to 965 (HPKA…KPHP). A compositionally biased stretch (basic residues) spans 782–796 (FSKHHLSPSKKSRGR). Glycyl lysine isopeptide (Lys-Gly) (interchain with G-Cter in SUMO2) cross-links involve residues Lys878, Lys901, Lys905, and Lys920. Glycyl lysine isopeptide (Lys-Gly) (interchain with G-Cter in SUMO2) cross-links involve residues Lys973, Lys985, and Lys998. Position 1017 is a phosphoserine (Ser1017). A disordered region spans residues 1017-1055 (SPLDPAKEVSGKEKASEQESEGSKAAHSGHSGGTSEGHK). Basic and acidic residues predominate over residues 1021 to 1040 (PAKEVSGKEKASEQESEGSK). Residues Lys1040 and Lys1055 each participate in a glycyl lysine isopeptide (Lys-Gly) (interchain with G-Cter in SUMO2) cross-link. Ser1118 is subject to Phosphoserine.

Belongs to the ARID5B family. In terms of processing, methylation at Lys-340 prevents DNA-binding. Demethylation by PHF2 promotes recruitment of the PHF2-ARID5B complex to promoters.

The protein localises to the nucleus. In terms of biological role, transcription coactivator that binds to the 5'-AATA[CT]-3' core sequence and plays a key role in adipogenesis and liver development. Acts by forming a complex with phosphorylated PHF2, which mediates demethylation at Lys-340, leading to target the PHF2-ARID5B complex to target promoters, where PHF2 mediates demethylation of dimethylated 'Lys-9' of histone H3 (H3K9me2), followed by transcription activation of target genes. The PHF2-ARID5B complex acts as a coactivator of HNF4A in liver. Required for adipogenesis: regulates triglyceride metabolism in adipocytes by regulating expression of adipogenic genes. Overexpression leads to induction of smooth muscle marker genes, suggesting that it may also act as a regulator of smooth muscle cell differentiation and proliferation. The protein is AT-rich interactive domain-containing protein 5B (ARID5B) of Bos taurus (Bovine).